Reading from the N-terminus, the 249-residue chain is DNA polymerase sliding clamp (249 aa).

The protein belongs to the PCNA family. Homotrimer. The subunits circularize to form a toroid; DNA passes through its center. Replication factor C (RFC) is required to load the toroid on the DNA.

In terms of biological role, sliding clamp subunit that acts as a moving platform for DNA processing. Responsible for tethering the catalytic subunit of DNA polymerase and other proteins to DNA during high-speed replication. The protein is DNA polymerase sliding clamp of Thermococcus fumicolans.